The sequence spans 141 residues: VLSGTDKTNVKGIFSKISSHAEEYGAETLERMFITYPQTKTYFPHFDLHHGSAQIKAHGKKVANALIEAVNHIDDISGALSKLSDLHAQKLRVDPVNFKLLGQCFLVVVAIHHPSALTPEVHASLDKFLCAVGAVLTAKYR.

The region spanning 1-141 is the Globin domain; that stretch reads VLSGTDKTNV…VGAVLTAKYR (141 aa). Residue H58 coordinates O2. H87 contributes to the heme b binding site.

Belongs to the globin family. In terms of assembly, heterotetramer of two alpha chains and two beta chains. Red blood cells.

Functionally, involved in oxygen transport from the lung to the various peripheral tissues. The chain is Hemoglobin subunit alpha-A (HBAA) from Struthio camelus (Common ostrich).